A 216-amino-acid chain; its full sequence is Octanoyltransferase (216 aa).

One can recognise a BPL/LPL catalytic domain in the interval 34–209 (ENTIDEIWLV…KMNQQLDYSH (176 aa)). Residues 73–80 (RGGQITFH), 140–142 (SLG), and 153–155 (GLA) contribute to the substrate site. Cys-171 serves as the catalytic Acyl-thioester intermediate.

The protein belongs to the LipB family.

It localises to the cytoplasm. It carries out the reaction octanoyl-[ACP] + L-lysyl-[protein] = N(6)-octanoyl-L-lysyl-[protein] + holo-[ACP] + H(+). It functions in the pathway protein modification; protein lipoylation via endogenous pathway; protein N(6)-(lipoyl)lysine from octanoyl-[acyl-carrier-protein]: step 1/2. Functionally, catalyzes the transfer of endogenously produced octanoic acid from octanoyl-acyl-carrier-protein onto the lipoyl domains of lipoate-dependent enzymes. Lipoyl-ACP can also act as a substrate although octanoyl-ACP is likely to be the physiological substrate. In Psychromonas ingrahamii (strain DSM 17664 / CCUG 51855 / 37), this protein is Octanoyltransferase.